Reading from the N-terminus, the 79-residue chain is Sec-independent protein translocase protein TatA (79 aa).

The helical transmembrane segment at 1 to 21 (MGGISIWQLLIIALIVILLFG) threads the bilayer. Positions 42-79 (AMTSETSEEEKKALEDSQTAQTSQQAEKKPESKDKEQA) are disordered. Over residues 57-66 (DSQTAQTSQQ) the composition is skewed to polar residues. A compositionally biased stretch (basic and acidic residues) spans 67–79 (AEKKPESKDKEQA).

The protein belongs to the TatA/E family. The Tat system comprises two distinct complexes: a TatABC complex, containing multiple copies of TatA, TatB and TatC subunits, and a separate TatA complex, containing only TatA subunits. Substrates initially bind to the TatABC complex, which probably triggers association of the separate TatA complex to form the active translocon.

It localises to the cell inner membrane. Part of the twin-arginine translocation (Tat) system that transports large folded proteins containing a characteristic twin-arginine motif in their signal peptide across membranes. TatA could form the protein-conducting channel of the Tat system. This Shewanella denitrificans (strain OS217 / ATCC BAA-1090 / DSM 15013) protein is Sec-independent protein translocase protein TatA.